The chain runs to 119 residues: Beta-2-microglobulin (119 aa).

The first 20 residues, 1–20, serve as a signal peptide directing secretion; that stretch reads MARFVVVPLLVLLSLFGLEA. Residues 25 to 114 enclose the Ig-like C1-type domain; sequence PKIQVYSRYP…VTFSTPKTVK (90 aa). Cysteine 45 and cysteine 100 are disulfide-bonded.

Belongs to the beta-2-microglobulin family. As to quaternary structure, heterodimer of an alpha chain and a beta chain. Beta-2-microglobulin is the beta-chain of major histocompatibility complex class I molecules.

It is found in the secreted. Its function is as follows. Component of the class I major histocompatibility complex (MHC). Involved in the presentation of peptide antigens to the immune system. The sequence is that of Beta-2-microglobulin (B2M) from Saguinus bicolor bicolor (Pied bare-faced tamarin).